The primary structure comprises 404 residues: Homoserine O-succinyltransferase (404 aa).

Low complexity predominate over residues 1–25; it reads MTDIQADPAVTAADAAQADTSSPTA. Positions 1 to 30 are disordered; it reads MTDIQADPAVTAADAAQADTSSPTAHQGKP. The 310-residue stretch at 75-384 folds into the AB hydrolase-1 domain; the sequence is NAVLICHALN…HGHDAFLLED (310 aa). S179 (nucleophile) is an active-site residue. R249 contributes to the substrate binding site. Catalysis depends on residues D344 and H377. Residue D378 participates in substrate binding.

Belongs to the AB hydrolase superfamily. MetX family. As to quaternary structure, homodimer.

The protein localises to the cytoplasm. It catalyses the reaction L-homoserine + succinyl-CoA = O-succinyl-L-homoserine + CoA. Its pathway is amino-acid biosynthesis; L-methionine biosynthesis via de novo pathway; O-succinyl-L-homoserine from L-homoserine: step 1/1. Its function is as follows. Transfers a succinyl group from succinyl-CoA to L-homoserine, forming succinyl-L-homoserine. The polypeptide is Homoserine O-succinyltransferase (Ralstonia pickettii (strain 12J)).